The sequence spans 4128 residues: DNA-dependent protein kinase catalytic subunit (4128 aa).

An N6-acetyllysine modification is found at lysine 117. An HEAT 1 repeat occupies 288-323; that stretch reads DNYVSLFEVLLKWCAHTNVELKKAALSALESFLKQV. 2 positions are modified to phosphoserine: serine 511 and serine 687. Lysine 828 carries the N6-acetyllysine modification. A phosphoserine mark is found at serine 841 and serine 893. An HEAT 2 repeat occupies 1004–1040; that stretch reads QDTVALLEAILDGIVDPVDSTLRDFCGRCIREFLKWS. Serine 1065 carries the phosphoserine modification. The residue at position 1209 (lysine 1209) is an N6-acetyllysine. The tract at residues 1503–1538 is interaction with C1D; it reads LDLSCKQLASGLLELAFAFGGLCERLVSLLLNPAVL. Residues 1503–1538 form a leucine-zipper region; it reads LDLSCKQLASGLLELAFAFGGLCERLVSLLLNPAVL. The stretch at 1723–1756 is one TPR 1 repeat; the sequence is PMQSREFPPGTPRFNNYVDCMKKFLDALELSQSP. Lysine 1970 is subject to N6-acetyllysine. The disordered stretch occupies residues 2050-2073; sequence QSYSYSSQDPRPATGRFRRREQRD. Serine 2056 carries the phosphoserine; by autocatalysis modification. Lysine 2259 is subject to N6-acetyllysine. The segment at 2436–3212 is KIP-binding; sequence LDIIYKMMPK…DNSMNVDQDG (777 aa). Threonine 2535 bears the Phosphothreonine mark. Threonine 2609 bears the Phosphothreonine; by autocatalysis mark. Phosphoserine; by autocatalysis is present on serine 2612. Residues threonine 2638 and threonine 2647 each carry the phosphothreonine; by autocatalysis modification. Positions 2737–2765 are may split the end of the DNA molecule, with the two strands separating around the region; it reads EKLSLMYARKGVAEQKREKEIKSELKMKQ. Serine 2789 carries the phosphoserine modification. Residues 2906-3539 form the FAT domain; the sequence is PAKRVRGKAR…VYPFIISSES (634 aa). 2 TPR repeats span residues 2920–2948 and 2949–2982; these read VLRW…SEIG and TKQI…QDWV. Residues 3200–3222 form a disordered region; it reads LPEDNSMNVDQDGDPSDRMEVQE. The residue at position 3205 (serine 3205) is a Phosphoserine. 5 positions are modified to N6-acetyllysine: lysine 3241, lysine 3260, lysine 3621, lysine 3638, and lysine 3642. The PI3K/PI4K catalytic domain maps to 3722 to 4053; that stretch reads FDERVTVMAS…ICYAKRKLAG (332 aa). Positions 3728–3734 are G-loop; that stretch reads VMASLRR. 2 positions are modified to phosphoserine: serine 3731 and serine 3821. The interval 3919-3927 is catalytic loop; the sequence is GIGDRHLNN. The activation loop stretch occupies residues 3939–3964; it reads GIDFGHAFGSATQFLPVPELMPFRLT. Serine 4026 carries the post-translational modification Phosphoserine. The FATC domain occupies 4096 to 4128; the sequence is SGLSEETQVKCLMDQATDPNILGRTWEGWEPWM.

This sequence belongs to the PI3/PI4-kinase family. In terms of assembly, DNA-PK is a heterotrimer of PRKDC and the Ku dimer (composed of XRCC6/Ku70 and XRCC5/Ku86). Formation of this complex may be promoted by interaction with ILF3. Component of the core long-range non-homologous end joining (NHEJ) complex (also named DNA-PK complex) composed of PRKDC, LIG4, XRCC4, XRCC6/Ku70, XRCC5/Ku86 and NHEJ1/XLF. Additional component of the NHEJ complex includes PAXX. Following autophosphorylation, PRKDC dissociates from DNA. Interacts with DNA-PKcs-interacting protein (KIP) with the region upstream the kinase domain. PRKDC alone also interacts with and phosphorylates DCLRE1C, thereby activating the latent endonuclease activity of this protein. Interacts with C1D. Interacts with TTI1 and TELO2. Interacts with CIB1. Interacts with SETX. Interacts with NR4A3; the DNA-dependent protein kinase complex DNA-PK phosphorylates and activates NR4A3 and prevents NR4A3 ubiquitination and degradation. Interacts with BRAT1. Part of the HDP-RNP complex composed of at least HEXIM1, PRKDC, XRCC5, XRCC6, paraspeckle proteins (SFPQ, NONO, PSPC1, RBM14, and MATR3) and NEAT1 RNA. Interacts with KAT5. Autophosphorylated at two clusters, the T2609 cluster and the S2056 cluster. Autophosphorylated on Ser-2056, Thr-2609, Thr-2638 and Thr-2647. Ser-2056 and Thr-2609 are DNA damage-inducible phosphorylation sites (inducible with ionizing radiation, IR) dephosphorylated by PPP5C. Autophosphorylation induces a conformational change that leads to remodeling of the DNA-PK complex, requisite for efficient end processing and DNA repair. Autophosphorylation in trans within DNA-PK complexes loaded on DNA ends leads to the dissociation of PRKDC from DNA and the transition into the short-range NHEJ complex. Autophosphorylation of the T2609 cluster is required for hematopoietic development and protein synthesis in erythrocytes precursors. In terms of processing, S-nitrosylated by GAPDH. Post-translationally, polyubiquitinated by RNF144A, leading to proteasomal degradation.

It is found in the nucleus. The protein localises to the nucleolus. The protein resides in the cytoplasm. It localises to the cytosol. It carries out the reaction L-seryl-[protein] + ATP = O-phospho-L-seryl-[protein] + ADP + H(+). It catalyses the reaction L-threonyl-[protein] + ATP = O-phospho-L-threonyl-[protein] + ADP + H(+). Activity seems to be attenuated by autophosphorylation. Binding to the SL1 region of U3 small nucleolar RNA promotes auto-phosphorylation activity. Inhibited by wortmannin. Serine/threonine-protein kinase that acts as a molecular sensor for DNA damage. Involved in DNA non-homologous end joining (NHEJ) required for double-strand break (DSB) repair and V(D)J recombination. Must be bound to DNA to express its catalytic properties. Promotes processing of hairpin DNA structures in V(D)J recombination by activation of the hairpin endonuclease artemis (DCLRE1C). Recruited by XRCC5 and XRCC6 to DNA ends and is required to (1) protect and align broken ends of DNA, thereby preventing their degradation, (2) and sequester the DSB for repair by NHEJ. Acts as a scaffold protein to aid the localization of DNA repair proteins to the site of damage. The assembly of the DNA-PK complex at DNA ends is also required for the NHEJ ligation step. Found at the ends of chromosomes, suggesting a further role in the maintenance of telomeric stability and the prevention of chromosomal end fusion. Also involved in modulation of transcription. As part of the DNA-PK complex, involved in the early steps of ribosome assembly by promoting the processing of precursor rRNA into mature 18S rRNA in the small-subunit processome. Binding to U3 small nucleolar RNA, recruits PRKDC and XRCC5/Ku86 to the small-subunit processome. Recognizes the substrate consensus sequence [ST]-Q. Phosphorylates 'Ser-139' of histone variant H2AX, thereby regulating DNA damage response mechanism. Phosphorylates ASF1A, DCLRE1C, c-Abl/ABL1, histone H1, HSPCA, c-jun/JUN, p53/TP53, PARP1, POU2F1, DHX9, FH, SRF, NHEJ1/XLF, XRCC1, XRCC4, XRCC5, XRCC6, WRN, MYC and RFA2. Can phosphorylate C1D not only in the presence of linear DNA but also in the presence of supercoiled DNA. Ability to phosphorylate p53/TP53 in the presence of supercoiled DNA is dependent on C1D. Acts as a regulator of the phosphatidylinositol 3-kinase/protein kinase B signal transduction by mediating phosphorylation of 'Ser-473' of protein kinase B (PKB/AKT1, PKB/AKT2, PKB/AKT3), promoting their activation. Contributes to the determination of the circadian period length by antagonizing phosphorylation of CRY1 'Ser-588' and increasing CRY1 protein stability, most likely through an indirect mechanism. Plays a role in the regulation of DNA virus-mediated innate immune response by assembling into the HDP-RNP complex, a complex that serves as a platform for IRF3 phosphorylation and subsequent innate immune response activation through the cGAS-STING pathway. Also regulates the cGAS-STING pathway by catalyzing phosphorylation of CGAS, thereby impairing CGAS oligomerization and activation. Also regulates the cGAS-STING pathway by mediating phosphorylation of PARP1. The polypeptide is DNA-dependent protein kinase catalytic subunit (PRKDC) (Homo sapiens (Human)).